The chain runs to 394 residues: Dimethyladenosine transferase 2, mitochondrial (394 aa).

Residues M1–R19 constitute a mitochondrion transit peptide. The S-adenosyl-L-methionine site is built by V75, E123, and D149. A DNA-binding region spans residues K326–R327.

The protein belongs to the class I-like SAM-binding methyltransferase superfamily. rRNA adenine N(6)-methyltransferase family. KsgA subfamily. In terms of assembly, homodimer. Component of the mitochondrial transcription initiation complex, composed at least of TFB2M, TFAM and POLRMT. In this complex TFAM recruits POLRMT to the promoter whereas TFB2M induces structural changes in POLRMT to enable promoter opening and trapping of the DNA non-template strand. Interacts with mitochondrial RNA polymerase POLRMT. Interacts with TFAM.

The protein resides in the mitochondrion. The catalysed reaction is adenosine in rRNA + S-adenosyl-L-methionine = N(6)-methyladenosine in rRNA + S-adenosyl-L-homocysteine + H(+). Its function is as follows. S-adenosyl-L-methionine-dependent rRNA methyltransferase which may methylate two specific adjacent adenosines in the loop of a conserved hairpin near the 3'-end of 12S mitochondrial rRNA. Component of the mitochondrial transcription initiation complex, composed at least of TFB2M, TFAM and POLRMT that is required for basal transcription of mitochondrial DNA. In this complex TFAM recruits POLRMT to a specific promoter whereas TFB2M induces structural changes in POLRMT to enable promoter opening and trapping of the DNA non-template strand. Stimulates transcription independently of the methyltransferase activity. This chain is Dimethyladenosine transferase 2, mitochondrial, found in Bos taurus (Bovine).